A 151-amino-acid polypeptide reads, in one-letter code: Small ribosomal subunit protein uS19 (151 aa).

It belongs to the universal ribosomal protein uS19 family.

Functionally, protein S19 forms a complex with S13 that binds strongly to the 16S ribosomal RNA. The protein is Small ribosomal subunit protein uS19 of Picrophilus torridus (strain ATCC 700027 / DSM 9790 / JCM 10055 / NBRC 100828 / KAW 2/3).